The sequence spans 288 residues: tRNA dimethylallyltransferase (288 aa).

17–24 lines the ATP pocket; that stretch reads GPTASGKS. A substrate-binding site is contributed by 19–24; sequence TASGKS.

It belongs to the IPP transferase family. As to quaternary structure, monomer. It depends on Mg(2+) as a cofactor.

The catalysed reaction is adenosine(37) in tRNA + dimethylallyl diphosphate = N(6)-dimethylallyladenosine(37) in tRNA + diphosphate. In terms of biological role, catalyzes the transfer of a dimethylallyl group onto the adenine at position 37 in tRNAs that read codons beginning with uridine, leading to the formation of N6-(dimethylallyl)adenosine (i(6)A). In Ruegeria sp. (strain TM1040) (Silicibacter sp.), this protein is tRNA dimethylallyltransferase.